The primary structure comprises 483 residues: Regulatory protein ViaA (483 aa).

The protein belongs to the ViaA family. As to quaternary structure, homodimer. Interacts with RavA.

Its subcellular location is the cytoplasm. Component of the RavA-ViaA chaperone complex, which may act on the membrane to optimize the function of some of the respiratory chains. ViaA stimulates the ATPase activity of RavA. This Shigella flexneri serotype 5b (strain 8401) protein is Regulatory protein ViaA.